Reading from the N-terminus, the 528-residue chain is Serine/threonine-protein kinase akt-2 (528 aa).

The PH domain occupies 12-115; it reads DIVIESWLHK…WIEAIQAVSS (104 aa). The interval 121 to 153 is disordered; sequence ENAGNTSMQEEDTNGNPSGESDVNMDATSTRSD. Polar residues predominate over residues 123-153; the sequence is AGNTSMQEEDTNGNPSGESDVNMDATSTRSD. One can recognise a Protein kinase domain in the interval 180-437; sequence FDFLKVLGQG…AREVSRAEFF (258 aa). ATP contacts are provided by residues 186–194 and Lys-209; that span reads LGQGTFGKV. Asp-303 (proton acceptor) is an active-site residue. The region spanning 438 to 515 is the AGC-kinase C-terminal domain; the sequence is KDVDWEATLR…YYVSGSLERS (78 aa).

It belongs to the protein kinase superfamily. AGC Ser/Thr protein kinase family. RAC subfamily. Interacts with pdk-1, sgk-1, akt-1 and daf-16. Part of a complex containing sgk-1, akt-1 and akt-2. Mg(2+) is required as a cofactor. In terms of tissue distribution, expressed in neurons, muscle cells of the pharynx, rectal gland cells, and spermatheca.

It carries out the reaction L-seryl-[protein] + ATP = O-phospho-L-seryl-[protein] + ADP + H(+). It catalyses the reaction L-threonyl-[protein] + ATP = O-phospho-L-threonyl-[protein] + ADP + H(+). Its activity is regulated as follows. Phosphorylated and activated by pdk-1. Its function is as follows. Acts downstream of PI3 kinase age-1 and kinase pdk-1 in the daf-2/insulin receptor-like transduction pathway. Essential role in regulating developmental arrest at the dauer stage. Phosphorylates Forkhead-related daf-16 and the longevity-promoting skn-1 transcription factors, which inhibits their entry into the nucleus and antagonizes their functions. Role in immune function and pathogen resistance. Downstream of age-1 and together with akt-1 and sgk-1, promotes cell survival during embryonic development. Plays a role in maintaining the gonadal basement membrane through antagonizing akt-1 activity. This Caenorhabditis elegans protein is Serine/threonine-protein kinase akt-2.